Consider the following 439-residue polypeptide: Lipoyl synthase, mitochondrial (439 aa).

The transit peptide at 1–37 (MVASARGLRTLHSAHSSISALPASTVPRLQLAVSRCY) directs the protein to the mitochondrion. [4Fe-4S] cluster contacts are provided by cysteine 150, cysteine 155, cysteine 161, cysteine 181, cysteine 185, cysteine 188, and serine 396. In terms of domain architecture, Radical SAM core spans 164–385 (GSSKSAATAT…KERALEMGFL (222 aa)).

It belongs to the radical SAM superfamily. Lipoyl synthase family. The cofactor is [4Fe-4S] cluster.

It localises to the mitochondrion. It catalyses the reaction [[Fe-S] cluster scaffold protein carrying a second [4Fe-4S](2+) cluster] + N(6)-octanoyl-L-lysyl-[protein] + 2 oxidized [2Fe-2S]-[ferredoxin] + 2 S-adenosyl-L-methionine + 4 H(+) = [[Fe-S] cluster scaffold protein] + N(6)-[(R)-dihydrolipoyl]-L-lysyl-[protein] + 4 Fe(3+) + 2 hydrogen sulfide + 2 5'-deoxyadenosine + 2 L-methionine + 2 reduced [2Fe-2S]-[ferredoxin]. Its pathway is protein modification; protein lipoylation via endogenous pathway; protein N(6)-(lipoyl)lysine from octanoyl-[acyl-carrier-protein]: step 2/2. In terms of biological role, catalyzes the radical-mediated insertion of two sulfur atoms into the C-6 and C-8 positions of the octanoyl moiety bound to the lipoyl domains of lipoate-dependent enzymes, thereby converting the octanoylated domains into lipoylated derivatives. The polypeptide is Lipoyl synthase, mitochondrial (Paracoccidioides lutzii (strain ATCC MYA-826 / Pb01) (Paracoccidioides brasiliensis)).